Here is a 386-residue protein sequence, read N- to C-terminus: Succinyl-diaminopimelate desuccinylase (386 aa).

Residue His-75 participates in Zn(2+) binding. The active site involves Asp-77. Asp-108 lines the Zn(2+) pocket. The Proton acceptor role is filled by Glu-138. Zn(2+)-binding residues include Glu-139, Glu-167, and His-356.

The protein belongs to the peptidase M20A family. DapE subfamily. In terms of assembly, homodimer. It depends on Zn(2+) as a cofactor. Requires Co(2+) as cofactor.

The catalysed reaction is N-succinyl-(2S,6S)-2,6-diaminopimelate + H2O = (2S,6S)-2,6-diaminopimelate + succinate. It functions in the pathway amino-acid biosynthesis; L-lysine biosynthesis via DAP pathway; LL-2,6-diaminopimelate from (S)-tetrahydrodipicolinate (succinylase route): step 3/3. Catalyzes the hydrolysis of N-succinyl-L,L-diaminopimelic acid (SDAP), forming succinate and LL-2,6-diaminopimelate (DAP), an intermediate involved in the bacterial biosynthesis of lysine and meso-diaminopimelic acid, an essential component of bacterial cell walls. This is Succinyl-diaminopimelate desuccinylase from Caulobacter vibrioides (strain ATCC 19089 / CIP 103742 / CB 15) (Caulobacter crescentus).